Reading from the N-terminus, the 85-residue chain is uncharacterized protein (85 aa).

The next 2 membrane-spanning stretches (helical) occupy residues 14–34 (FLFG…RATI) and 60–80 (IFVY…IYFL).

The protein localises to the cell membrane. This is an uncharacterized protein from Escherichia coli O157:H7.